The chain runs to 67 residues: Protein LITTLE ZIPPER 3 (67 aa).

Residues 14–59 adopt a coiled-coil conformation; sequence YIMKENERLRKKAELLNQENQQLLFQLKQKLSKTKNSNNGSNNDNK. The disordered stretch occupies residues 42-67; sequence QKLSKTKNSNNGSNNDNKSSSASGQS.

As to quaternary structure, interacts with REV. Interacts with ATBH-8, ATBH-9, ATB-14 and ATB-15. As to expression, expressed in the adaxial epidermis of the cotyledons and leaves, and in the vascular cylinder of wild-type torpedo stage embryos. Confined in the central zone and the organizing center in the shoot apical meristem.

Its subcellular location is the nucleus. Its function is as follows. Competitive inhibitor of the HD-ZIPIII transcription factors in shoot apical meristem (SAM) development. Acts by forming non-functional heterodimers. Part of a negative feedback loop. Involved in SAM development and lateral organ patterning. Essential for proper functioning of stem cells in the SAM. This Arabidopsis thaliana (Mouse-ear cress) protein is Protein LITTLE ZIPPER 3.